A 465-amino-acid chain; its full sequence is Endo-1,3-1,4-beta-glycanase EglC (465 aa).

3 Hemolysin-type calcium-binding repeats span residues 33-50, 105-122, and 123-140; these read YGTA…VDVT, FGNS…SQTI, and NGGA…ADTF. In terms of domain architecture, GH16 spans 213 to 462; the sequence is LDRSVLTQTF…YVKAYSLDAD (250 aa). The active-site Nucleophile is the Glu-349. Glu-354 (proton donor) is an active-site residue.

The protein belongs to the glycosyl hydrolase 16 family.

It is found in the secreted. The protein operates within glycan metabolism; exopolysaccharide biosynthesis. Its function is as follows. Cleaves high molecular weight succinoglycan to yield LMW succinoglycan. Dynamically regulates the molecular weight distribution of succinoglycan by cleaving nascent succinoglycan only during a limited period after its synthesis, perhaps before it undergoes a time-dependent change in its conformation or aggregation state. The sequence is that of Endo-1,3-1,4-beta-glycanase EglC (eglC) from Rhizobium meliloti (strain 1021) (Ensifer meliloti).